The chain runs to 374 residues: Glutamate 5-kinase (374 aa).

Lys16 is a binding site for ATP. Residues Ser56, Asp143, and Asn155 each coordinate substrate. 175–176 (TD) is a binding site for ATP. The PUA domain maps to 282–360 (RGRVVLDAGA…SEIEAVLGYV (79 aa)).

The protein belongs to the glutamate 5-kinase family.

Its subcellular location is the cytoplasm. It carries out the reaction L-glutamate + ATP = L-glutamyl 5-phosphate + ADP. It participates in amino-acid biosynthesis; L-proline biosynthesis; L-glutamate 5-semialdehyde from L-glutamate: step 1/2. Catalyzes the transfer of a phosphate group to glutamate to form L-glutamate 5-phosphate. The chain is Glutamate 5-kinase from Ralstonia nicotianae (strain ATCC BAA-1114 / GMI1000) (Ralstonia solanacearum).